The chain runs to 103 residues: Small ribosomal subunit protein uS10 (103 aa).

This sequence belongs to the universal ribosomal protein uS10 family. Part of the 30S ribosomal subunit.

Its function is as follows. Involved in the binding of tRNA to the ribosomes. The sequence is that of Small ribosomal subunit protein uS10 from Chromohalobacter salexigens (strain ATCC BAA-138 / DSM 3043 / CIP 106854 / NCIMB 13768 / 1H11).